The following is a 483-amino-acid chain: MDWAEKYRPRHLNEMVGNREALHQMSEWATRWTVESPPLILYGKPGIGKTSSAWALAHDMNWEVVELNASDQRTKAVIEKVAGGSASTGSLTGAARKLIILDEADNLQGNADRGGARAIAEVIRQARQPLILIANDLYGLDGTIRNLCTKVQFKALPAKSLVPRLREICSREQLTCSAQALTDIAEQSGGDIRSAVTMLYASAIGKDTVGEDDVSISAKDSRASIFDLVAATLGYRQVPSLLDMSMSVDETPDTILQWIEGNLGVLPDRKKTAQAYAALSRADMYLGYTFLTQYYTLWRYATSVMLYGVHDVMKGRPSGYAKIMPPSRWRQMSVAKKQKTIREQLLSDMGTSMHMSASTVRNLYLCPISLLAKQFPEQFAKSYDLDVDKLDILIHDPATSKSIIKKIEDEKKQIEKELKKKKKEEDAKGKKARGSKKEKEPIVEETPSIDSFSSQEPGNPPEQPSTEPVEKDKKSSQSTLFSF.

43-50 (GKPGIGKT) is a binding site for ATP. Residues 417-442 (ELKKKKKEEDAKGKKARGSKKEKEPI) are compositionally biased toward basic and acidic residues. Residues 417-483 (ELKKKKKEED…KSSQSTLFSF (67 aa)) form a disordered region. Residues 448 to 457 (SIDSFSSQEP) show a composition bias toward polar residues.

It belongs to the activator 1 small subunits family. RfcL subfamily. In terms of assembly, heteromultimer composed of small subunits (RfcS) and large subunits (RfcL).

Its function is as follows. Part of the RFC clamp loader complex which loads the PCNA sliding clamp onto DNA. In Methanospirillum hungatei JF-1 (strain ATCC 27890 / DSM 864 / NBRC 100397 / JF-1), this protein is Replication factor C large subunit.